A 431-amino-acid chain; its full sequence is Glutamate-1-semialdehyde 2,1-aminomutase (431 aa).

The residue at position 265 (Lys265) is an N6-(pyridoxal phosphate)lysine.

The protein belongs to the class-III pyridoxal-phosphate-dependent aminotransferase family. HemL subfamily. Homodimer. Pyridoxal 5'-phosphate serves as cofactor.

The protein resides in the cytoplasm. It catalyses the reaction (S)-4-amino-5-oxopentanoate = 5-aminolevulinate. The protein operates within porphyrin-containing compound metabolism; protoporphyrin-IX biosynthesis; 5-aminolevulinate from L-glutamyl-tRNA(Glu): step 2/2. The sequence is that of Glutamate-1-semialdehyde 2,1-aminomutase from Vibrio parahaemolyticus serotype O3:K6 (strain RIMD 2210633).